The primary structure comprises 235 residues: Glucosamine-6-phosphate deaminase (235 aa).

The active-site Proton acceptor; for enolization step is the Asp62. The active-site For ring-opening step is Asn128. His130 (proton acceptor; for ring-opening step) is an active-site residue. The For ring-opening step role is filled by Glu135.

Belongs to the glucosamine/galactosamine-6-phosphate isomerase family. NagB subfamily.

It carries out the reaction alpha-D-glucosamine 6-phosphate + H2O = beta-D-fructose 6-phosphate + NH4(+). Its pathway is amino-sugar metabolism; N-acetylneuraminate degradation; D-fructose 6-phosphate from N-acetylneuraminate: step 5/5. Catalyzes the reversible isomerization-deamination of glucosamine 6-phosphate (GlcN6P) to form fructose 6-phosphate (Fru6P) and ammonium ion. The chain is Glucosamine-6-phosphate deaminase from Lactococcus lactis subsp. cremoris (strain SK11).